The chain runs to 80 residues: MTNVGDQGVDAVFGVIYPPQVALVSFGKPAQRVCAVDGAIHVMTTVLATLPADHGCSDDHRGALFFLSINELTRCAAVTG.

Belongs to the 2-oxoacid dehydrogenase family.

This is an uncharacterized protein from Mycobacterium tuberculosis (strain CDC 1551 / Oshkosh).